A 375-amino-acid chain; its full sequence is tRNA-specific 2-thiouridylase MnmA (375 aa).

ATP-binding positions include 20 to 27 and Leu-46; that span reads AMSGGVDS. Cys-114 acts as the Nucleophile in catalysis. A disulfide bridge connects residues Cys-114 and Cys-211. Gly-138 provides a ligand contact to ATP. The segment at 160–162 is interaction with tRNA; that stretch reads RDQ. Cys-211 acts as the Cysteine persulfide intermediate in catalysis.

Belongs to the MnmA/TRMU family.

The protein localises to the cytoplasm. It catalyses the reaction S-sulfanyl-L-cysteinyl-[protein] + uridine(34) in tRNA + AH2 + ATP = 2-thiouridine(34) in tRNA + L-cysteinyl-[protein] + A + AMP + diphosphate + H(+). Its function is as follows. Catalyzes the 2-thiolation of uridine at the wobble position (U34) of tRNA, leading to the formation of s(2)U34. In Ruegeria pomeroyi (strain ATCC 700808 / DSM 15171 / DSS-3) (Silicibacter pomeroyi), this protein is tRNA-specific 2-thiouridylase MnmA.